Reading from the N-terminus, the 165-residue chain is MKPVPLILLLATVLLSSHIPPSVCRPRDLAMFDGHGYKSQLDEVLLKAGDNAISYLIGEKILRYLQRNPRLQAGLPPQFPFEVTPLGSRGLGHLARSLPPLEEQRAPEEGNSLEEFVELTKRNDDPPISIDLTFHLLRNMIEMARIESQKEQAELNRKYLDEVGK.

A signal peptide spans 1–18 (MKPVPLILLLATVLLSSH). Val163 carries the valine amide modification.

It belongs to the sauvagine/corticotropin-releasing factor/urotensin I family.

The protein localises to the secreted. Functionally, urotensin is found in the teleost caudal neurosecretory system. It has a suggested role in osmoregulation and as a corticotropin-releasing factor. The non-hormonal portion of this precursor may be a urotensin binding protein, urophysin. The protein is UI of Oncorhynchus mykiss (Rainbow trout).